The following is a 287-amino-acid chain: Nucleotide-binding protein GM21_3387 (287 aa).

8–15 (GLSGSGKS) provides a ligand contact to ATP. 59-62 (DIRS) serves as a coordination point for GTP.

It belongs to the RapZ-like family.

Its function is as follows. Displays ATPase and GTPase activities. The protein is Nucleotide-binding protein GM21_3387 of Geobacter sp. (strain M21).